The following is a 332-amino-acid chain: tRNA(Ile)-lysidine synthase (332 aa).

39-44 contributes to the ATP binding site; that stretch reads SGGADS.

The protein belongs to the tRNA(Ile)-lysidine synthase family.

It is found in the cytoplasm. It catalyses the reaction cytidine(34) in tRNA(Ile2) + L-lysine + ATP = lysidine(34) in tRNA(Ile2) + AMP + diphosphate + H(+). Ligates lysine onto the cytidine present at position 34 of the AUA codon-specific tRNA(Ile) that contains the anticodon CAU, in an ATP-dependent manner. Cytidine is converted to lysidine, thus changing the amino acid specificity of the tRNA from methionine to isoleucine. The protein is tRNA(Ile)-lysidine synthase of Leifsonia xyli subsp. xyli (strain CTCB07).